Here is a 71-residue protein sequence, read N- to C-terminus: EAGEECDCGSPGNPCCDAATCKLRQGAQCAEGLCCDQCRFMKKGTVCRIARGDDMDDYCNGISAGCPRNPF.

The Disintegrin domain maps to 1 to 71; sequence EAGEECDCGS…ISAGCPRNPF (71 aa). Cystine bridges form between C6-C21, C8-C16, C15-C38, C29-C35, C34-C59, and C47-C66. The Cell attachment site motif lies at 51-53; it reads RGD.

This sequence belongs to the venom metalloproteinase (M12B) family. P-II subfamily. P-IIa sub-subfamily. As to quaternary structure, monomer. Expressed by the venom gland.

The protein localises to the secreted. Functionally, inhibits fibrinogen interaction with platelets. Acts by binding to alpha-IIb/beta-3 (ITGA2B/ITGB3) on the platelet surface and inhibits aggregation induced by ADP, thrombin, platelet-activating factor and collagen. This chain is Disintegrin halysin, found in Gloydius blomhoffii (Mamushi).